The sequence spans 328 residues: Malate dehydrogenase (328 aa).

An NAD(+)-binding site is contributed by 11 to 17 (GAAGQIG). Arg94 and Arg100 together coordinate substrate. NAD(+) contacts are provided by residues Asn107, Gln114, and 131–133 (VGN). Substrate contacts are provided by Asn133 and Arg164. His189 serves as the catalytic Proton acceptor.

Belongs to the LDH/MDH superfamily. MDH type 2 family.

It catalyses the reaction (S)-malate + NAD(+) = oxaloacetate + NADH + H(+). Functionally, catalyzes the reversible oxidation of malate to oxaloacetate. This chain is Malate dehydrogenase, found in Xanthomonas oryzae pv. oryzae (strain MAFF 311018).